A 1699-amino-acid chain; its full sequence is Eukaryotic translation initiation factor 2-alpha kinase gcn-2 (1699 aa).

Residues 22-138 enclose the RWD domain; it reads EEKLALDAVY…HRVREFLTDH (117 aa). Protein kinase domains follow at residues 108–507 and 508–999; these read LTIL…DVVL and VRNK…DEDL. Residues 114-122, K154, 497-505, and K520 each bind ATP; these read MADTWEGCV and LGRGGFGDV. 2 disordered regions span residues 572–615 and 632–725; these read DSSL…SLMP and KEWS…SVFE. Acidic residues predominate over residues 669–706; it reads SSDDEDDDDSSEIDWDAESEEVEDEESDDSDEEDEDDG. Residues 711–720 show a composition bias toward polar residues; the sequence is QLNTETSTGA. The active-site Proton acceptor is D829.

It belongs to the protein kinase superfamily. Ser/Thr protein kinase family. GCN2 subfamily.

It carries out the reaction L-seryl-[protein] + ATP = O-phospho-L-seryl-[protein] + ADP + H(+). The catalysed reaction is L-threonyl-[protein] + ATP = O-phospho-L-threonyl-[protein] + ADP + H(+). In terms of biological role, serine/threonine-protein kinase which phosphorylates the alpha subunit of eukaryotic translation-initiation factor 2 (eIF2alpha), leading to its inactivation and thus to a rapid reduction of translational initiation and repression of global protein synthesis. Involved in the unfolded protein response (UPR) triggered by several stresses including mitochondrial, osmotic and oxidative stresses, amino acid deprivation and UV irradiation, probably by phosphorylating and inhibiting eIF2alpha. In addition, leads to the selective translation/transcription of some mRNA including atf-5, pha-4 and gpdh-1 which are part of the UPR. Required for maintaining lifespan during amino acid starvation. Involved in hypoxia-mediated adaptive protective response. The sequence is that of Eukaryotic translation initiation factor 2-alpha kinase gcn-2 from Caenorhabditis elegans.